A 512-amino-acid chain; its full sequence is Glutathione-binding protein GsiB (512 aa).

The signal sequence occupies residues 1–26 (MTQFITHKWLAALGLASSIAAFPALA).

Belongs to the bacterial solute-binding protein 5 family. As to quaternary structure, the complex is composed of two ATP-binding proteins (GsiA), two transmembrane proteins (GsiC and GsiD) and a solute-binding protein (GsiB).

The protein resides in the periplasm. Functionally, part of the ABC transporter complex GsiABCD involved in glutathione import. Binds glutathione. This is Glutathione-binding protein GsiB from Salmonella choleraesuis (strain SC-B67).